The primary structure comprises 240 residues: MEMKQISETTLKITISMEDLEERGMELKDFLIPQEKTEEFFYTVMDELDLPENFKDSGMLSFRVTPRNDRIDVFVTKSEINKNLNLEDLSDFDDISKMSPEDFFNTLEETMREKGDAAALDKLAEIEKREEEKTQQEKGETKEKRDYVHFVLDFPNIQQVINFAKTVDYDVEASELFKESDAYHMTVLLNLEDKPDYYADLMFARMLEHAGRGTKTRAYLLEHGVQLIKADALQELQMIG.

The protein belongs to the MecA family. In terms of assembly, homodimer.

Functionally, enables the recognition and targeting of unfolded and aggregated proteins to the ClpC protease or to other proteins involved in proteolysis. In Streptococcus mutans serotype c (strain ATCC 700610 / UA159), this protein is Adapter protein MecA.